The primary structure comprises 331 residues: 2-oxoglutarate-dependent dioxygenase (331 aa).

A Fe2OG dioxygenase domain is found at 186 to 292 (PACPLRLLHY…RYSVVFFMDG (107 aa)). His-214, Asp-216, and His-272 together coordinate Fe cation. Arg-283 provides a ligand contact to 2-oxoglutarate.

The protein belongs to the iron/ascorbate-dependent oxidoreductase family. Fe(2+) is required as a cofactor.

The protein operates within mycotoxin biosynthesis. Its function is as follows. 2-oxoglutarate-dependent dioxygenase; part of the gene cluster that mediates the biosynthesis of the selective antifungal agent ascochitine, an o-quinone methide that plays a possible protective role against other microbial competitors in nature and is considered to be important for pathogenicity of legume-associated Didymella species. The pathway probably begins with the synthesis of a keto-aldehyde intermediate by the ascochitine non-reducing polyketide synthase pksAC from successive condensations of 4 malonyl-CoA units, presumably with a simple acetyl-CoA starter unit. Release of the keto-aldehyde intermediate is consistent with the presence of the C-terminal reductive release domain. The HR-PKS (orf7) probably makes a diketide starter unit which is passed to the non-reducing polyketide synthase pksAC for further extension, producing ascochital and ascochitine. The aldehyde dehydrogenase (orf1), the 2-oxoglutarate-dependent dioxygenase (orf3) and the dehydrogenase (orf9) are probably involved in subsequent oxidations of methyl groups to the carboxylic acid of the heterocyclic ring. The ascochitine gene cluster also includes a gene encoding a short peptide with a cupin domain (orf2) that is often found in secondary metabolite gene clusters and which function has still to be determined. This is 2-oxoglutarate-dependent dioxygenase from Didymella fabae (Leaf and pod spot disease fungus).